The chain runs to 243 residues: ATP synthase subunit a, chloroplastic (243 aa).

5 helical membrane passes run 32–52 (GQVL…SFVG), 96–116 (TVFL…WALI), 129–149 (DINT…YAGI), 195–215 (LVVG…IMLL), and 216–236 (GCFT…AYIG).

It belongs to the ATPase A chain family. F-type ATPases have 2 components, CF(1) - the catalytic core - and CF(0) - the membrane proton channel. CF(1) has five subunits: alpha(3), beta(3), gamma(1), delta(1), epsilon(1). CF(0) has four main subunits: a, b, b' and c.

Its subcellular location is the plastid. The protein resides in the chloroplast thylakoid membrane. Functionally, key component of the proton channel; it plays a direct role in the translocation of protons across the membrane. The sequence is that of ATP synthase subunit a, chloroplastic from Tetradesmus obliquus (Green alga).